Reading from the N-terminus, the 187-residue chain is BLOC-1-related complex subunit 8 homolog (187 aa).

The interval 165 to 187 (QSQHETANDTRQGYNDDANNDQD) is disordered.

The protein belongs to the BORCS8 family.

Its subcellular location is the lysosome membrane. Functionally, may participate in the coupling of lysosomes to microtubule plus-end-directed kinesin motor. The chain is BLOC-1-related complex subunit 8 homolog from Nematostella vectensis (Starlet sea anemone).